Here is a 182-residue protein sequence, read N- to C-terminus: Large ribosomal subunit protein uL6 (182 aa).

Belongs to the universal ribosomal protein uL6 family. Part of the 50S ribosomal subunit.

Functionally, this protein binds to the 23S rRNA, and is important in its secondary structure. It is located near the subunit interface in the base of the L7/L12 stalk, and near the tRNA binding site of the peptidyltransferase center. This chain is Large ribosomal subunit protein uL6, found in Caldicellulosiruptor bescii (strain ATCC BAA-1888 / DSM 6725 / KCTC 15123 / Z-1320) (Anaerocellum thermophilum).